Consider the following 35-residue polypeptide: MSDIN-like toxin proprotein 6 (35 aa).

Positions 1–10 are excised as a propeptide; that stretch reads MSDINTTRLP. Residues 11–18 constitute a cross-link (cyclopeptide (Phe-Pro)); it reads FVFVASPP. A propeptide spanning residues 19 to 35 is cleaved from the precursor; the sequence is CVGDDIAMVLTRGENLC.

This sequence belongs to the MSDIN fungal toxin family. Processed by the macrocyclase-peptidase enzyme POPB to yield a toxic cyclic octapeptide. POPB first removes 10 residues from the N-terminus. Conformational trapping of the remaining peptide forces the enzyme to release this intermediate rather than proceed to macrocyclization. The enzyme rebinds the remaining peptide in a different conformation and catalyzes macrocyclization of the N-terminal 8 residues. Expressed in basidiocarps.

Functionally, probable toxin that belongs to the MSDIN-like toxin family responsible for a large number of food poisoning cases and deaths. The sequence is that of MSDIN-like toxin proprotein 6 from Amanita exitialis (Guangzhou destroying angel).